The following is a 604-amino-acid chain: Prostaglandin G/H synthase 2 (604 aa).

The N-terminal stretch at 1–17 (MLARALLLCAAVALSGA) is a signal peptide. The region spanning 18–55 (ANPCCSHPCQNRGVCMSVGFDQYKCDCTRTGFYGENCT) is the EGF-like domain. 4 disulfide bridges follow: cysteine 21–cysteine 32, cysteine 22–cysteine 145, cysteine 26–cysteine 42, and cysteine 44–cysteine 54. A glycan (N-linked (GlcNAc...) asparagine) is linked at asparagine 53. Arginine 106 contacts substrate. N-linked (GlcNAc...) asparagine glycosylation is present at asparagine 130. Residue histidine 193 is the Proton acceptor of the active site. Residue tyrosine 341 coordinates substrate. Tyrosine 371 serves as the catalytic For cyclooxygenase activity. Histidine 374 serves as a coordination point for heme b. N-linked (GlcNAc...) asparagine glycosylation is present at asparagine 396. Cysteine 526 carries the S-nitrosocysteine modification. Cysteine 555 and cysteine 561 form a disulfide bridge. Serine 565 is subject to O-acetylserine. Asparagine 580 is a glycosylation site (N-linked (GlcNAc...) asparagine).

The protein belongs to the prostaglandin G/H synthase family. As to quaternary structure, homodimer. It depends on heme b as a cofactor. In terms of processing, S-nitrosylation by NOS2 (iNOS) activates enzyme activity. S-nitrosylation may take place on different Cys residues in addition to Cys-526. Acetylated at Ser-565 by SPHK1. During neuroinflammation, acetylation by SPHK1 promotes neuronal secretion of specialized preresolving mediators (SPMs), especially 15-R-lipoxin A4, which results in an increase of phagocytic microglia.

It localises to the microsome membrane. It is found in the endoplasmic reticulum membrane. The protein resides in the nucleus inner membrane. Its subcellular location is the nucleus outer membrane. The enzyme catalyses (5Z,8Z,11Z,14Z)-eicosatetraenoate + AH2 + 2 O2 = prostaglandin H2 + A + H2O. The catalysed reaction is (5Z,8Z,11Z,14Z)-eicosatetraenoate + 2 O2 = prostaglandin G2. It catalyses the reaction prostaglandin G2 + AH2 = prostaglandin H2 + A + H2O. It carries out the reaction (5Z,8Z,11Z,14Z,17Z)-eicosapentaenoate + 2 O2 = prostaglandin G3. The enzyme catalyses prostaglandin G3 + AH2 = prostaglandin H3 + A + H2O. The catalysed reaction is (8Z,11Z,14Z)-eicosatrienoate + 2 O2 = prostaglandin G1. It catalyses the reaction prostaglandin G1 + AH2 = prostaglandin H1 + A + H2O. It carries out the reaction 2-(5Z,8Z,11Z,14Z)-eicosatetraenoyl-sn-glycero-3-phosphoethanolamine + 2 O2 = 2-(prostaglandin G2)-sn-glycero-3-phosphoethanolamine. The enzyme catalyses 2-(prostaglandin G2)-sn-glycero-3-phosphoethanolamine + AH2 = 2-(prostaglandin H2)-sn-glycero-3-phosphoethanolamine + A + H2O. The catalysed reaction is 2-(5Z,8Z,11Z,14Z)-eicosatetraenoyl-sn-glycero-3-phosphocholine + 2 O2 = 2-(prostaglandin G2)-sn-glycero-3-phosphocholine. It catalyses the reaction 2-(prostaglandin G2)-sn-glycero-3-phosphocholine + AH2 = 2-(prostaglandin H2)-sn-glycero-3-phosphocholine + A + H2O. It carries out the reaction (15S)-hydroperoxy-(5Z,8Z,11Z,13E)-eicosatetraenoate + AH2 = (15S)-hydroxy-(5Z,8Z,11Z,13E)-eicosatetraenoate + A + H2O. The enzyme catalyses 2-(5Z,8Z,11Z,14Z)-eicosatetraenoyl-sn-glycero-3-phosphocholine + AH2 + O2 = 2-[(15S)-hydroxy-(5Z,8Z,11Z,13E)-eicosatetraenoyl]-sn-glycero-3-phosphocholine + A + H2O. The catalysed reaction is 2-(5Z,8Z,11Z,14Z)-eicosatetraenoyl-sn-glycero-3-phosphocholine + AH2 + O2 = 2-[(15R)-hydroxy-(5Z,8Z,11Z,13E)-eicosatetraenoyl]-sn-glycero-3-phosphocholine + A + H2O. It catalyses the reaction 2-(5Z,8Z,11Z,14Z)-eicosatetraenoyl-sn-glycero-3-phosphocholine + AH2 + O2 = 2-[(11R)-hydroxy-(5Z,8Z,12E,14Z)-eicosatetraenoyl]-sn-glycero-3-phosphocholine + A + H2O. It carries out the reaction (9Z,12Z)-octadecadienoate + AH2 + O2 = 9-hydroxy-(10E,12Z)-octadecadienoate + A + H2O. The enzyme catalyses (9Z,12Z)-octadecadienoate + AH2 + O2 = 13-hydroxy-(9Z,11E)-octadecadienoate + A + H2O. The catalysed reaction is (5Z,8Z,11Z,14Z)-eicosatetraenoate + AH2 + O2 = (15R)-hydroxy-(5Z,8Z,11Z,13E)-eicosatetraenoate + A + H2O. It catalyses the reaction (5Z,8Z,11Z,14Z)-eicosatetraenoate + AH2 + O2 = (11R)-hydroxy-(5Z,8Z,12E,14Z)-eicosatetraenoate + A + H2O. It carries out the reaction (5Z,8Z,11Z,14Z,17Z)-eicosapentaenoate + AH2 + O2 = (11R)-hydroxy-(5Z,8Z,12E,14Z,17Z)-eicosapentaenoate + A + H2O. The enzyme catalyses (5Z,8Z,11Z,14Z,17Z)-eicosapentaenoate + AH2 + O2 = (18S)-hydroxy-(5Z,8Z,11Z,14Z,16E)-eicosapentaenoate + A + H2O. The catalysed reaction is (5Z,8Z,11Z,14Z,17Z)-eicosapentaenoate + AH2 + O2 = (18R)-hydroxy-(5Z,8Z,11Z,14Z,16E)-eicosapentaenoate + A + H2O. It catalyses the reaction (5Z,8Z,11Z,14Z,17Z)-eicosapentaenoate + AH2 + O2 = (15R)-hydroxy-(5Z,8Z,11Z,13E,17Z)-eicosapentaenoate + A + H2O. It carries out the reaction (5Z,8Z,11Z,14Z,17Z)-eicosapentaenoate + AH2 + O2 = (15S)-hydroxy-(5Z,8Z,11Z,13E,17Z)-eicosapentaenoate + A + H2O. The enzyme catalyses (7Z,10Z,13Z,16Z,19Z)-docosapentaenoate + AH2 + O2 = 13R-hydroxy-(7Z,10Z,14E,16Z,19Z)-docosapentaenoate + A + H2O. The catalysed reaction is (4Z,7Z,10Z,13Z,16Z,19Z)-docosahexaenoate + AH2 + O2 = 13-hydroxy-(4Z,7Z,10Z,14E,16Z,19Z)-docosahexaenoate + A + H2O. It catalyses the reaction (5S)-hydroxy-(6E,8Z,11Z,14Z)-eicosatetraenoate + AH2 + O2 = (5S,15R)-dihydroxy-(6E,8Z,11Z,13E)-eicosatetraenoate + A + H2O. It carries out the reaction (4Z,7Z,10Z,13Z,16Z,19Z)-docosahexaenoate + AH2 + O2 = 17R-hydroxy-(4Z,7Z,10Z,13Z,15E,19Z)-docosahexaenoate + A + H2O. The enzyme catalyses (5S)-hydroxy-(6E,8Z,11Z,14Z)-eicosatetraenoate + AH2 + O2 = (5S,15S)-dihydroxy-(6E,8Z,11Z,13E)-eicosatetraenoate + A + H2O. The catalysed reaction is (5S)-hydroxy-(6E,8Z,11Z,14Z)-eicosatetraenoate + AH2 + O2 = (5S,11R)-dihydroxy-(6E,8Z,12E,14Z)-eicosatetraenoate + A + H2O. It catalyses the reaction 2-(5Z,8Z,11Z,14Z-eicosatetraenoyl)-glycerol + 2 O2 = 2-glyceryl-prostaglandin G2. It carries out the reaction 2-glyceryl-prostaglandin G2 + AH2 = 2-glyceryl-prostaglandin H2 + A + H2O. The enzyme catalyses (5Z,8Z,11Z,14Z)-eicosatetraenoate + O2 = (15R)-hydroperoxy-(5Z,8Z,11Z,13E)-eicosatetraenoate. The catalysed reaction is (5Z,8Z,11Z,14Z)-eicosatetraenoate + O2 = 11R-hydroperoxy-(5Z,8Z,12E,14Z)-eicosatetraenoate. It catalyses the reaction (9Z,12Z)-octadecadienoate + AH2 + O2 = (9R)-hydroxy-(10E,12Z)-octadecadienoate + A + H2O. It carries out the reaction (9Z,12Z)-octadecadienoate + AH2 + O2 = (9S)-hydroxy-(10E,12Z)-octadecadienoate + A + H2O. The enzyme catalyses (9Z,12Z)-octadecadienoate + AH2 + O2 = (13S)-hydroxy-(9Z,11E)-octadecadienoate + A + H2O. The catalysed reaction is (9Z,12Z)-octadecadienoate + AH2 + O2 = (13R)-hydroxy-(9Z,11E)-octadecadienoate + A + H2O. Its pathway is lipid metabolism; prostaglandin biosynthesis. Its function is as follows. Dual cyclooxygenase and peroxidase in the biosynthesis pathway of prostanoids, a class of C20 oxylipins mainly derived from arachidonate ((5Z,8Z,11Z,14Z)-eicosatetraenoate, AA, C20:4(n-6)), with a particular role in the inflammatory response. The cyclooxygenase activity oxygenates AA to the hydroperoxy endoperoxide prostaglandin G2 (PGG2), and the peroxidase activity reduces PGG2 to the hydroxy endoperoxide prostaglandin H2 (PGH2), the precursor of all 2-series prostaglandins and thromboxanes. This complex transformation is initiated by abstraction of hydrogen at carbon 13 (with S-stereochemistry), followed by insertion of molecular O2 to form the endoperoxide bridge between carbon 9 and 11 that defines prostaglandins. The insertion of a second molecule of O2 (bis-oxygenase activity) yields a hydroperoxy group in PGG2 that is then reduced to PGH2 by two electrons. Similarly catalyzes successive cyclooxygenation and peroxidation of dihomo-gamma-linoleate (DGLA, C20:3(n-6)) and eicosapentaenoate (EPA, C20:5(n-3)) to corresponding PGH1 and PGH3, the precursors of 1- and 3-series prostaglandins. In an alternative pathway of prostanoid biosynthesis, converts 2-arachidonoyl lysophopholipids to prostanoid lysophopholipids, which are then hydrolyzed by intracellular phospholipases to release free prostanoids. Metabolizes 2-arachidonoyl glycerol yielding the glyceryl ester of PGH2, a process that can contribute to pain response. Generates lipid mediators from n-3 and n-6 polyunsaturated fatty acids (PUFAs) via a lipoxygenase-type mechanism. Oxygenates PUFAs to hydroperoxy compounds and then reduces them to corresponding alcohols. Plays a role in the generation of resolution phase interaction products (resolvins) during both sterile and infectious inflammation. Metabolizes docosahexaenoate (DHA, C22:6(n-3)) to 17R-HDHA, a precursor of the D-series resolvins (RvDs). As a component of the biosynthetic pathway of E-series resolvins (RvEs), converts eicosapentaenoate (EPA, C20:5(n-3)) primarily to 18S-HEPE that is further metabolized by ALOX5 and LTA4H to generate 18S-RvE1 and 18S-RvE2. In vascular endothelial cells, converts docosapentaenoate (DPA, C22:5(n-3)) to 13R-HDPA, a precursor for 13-series resolvins (RvTs) shown to activate macrophage phagocytosis during bacterial infection. In activated leukocytes, contributes to oxygenation of hydroxyeicosatetraenoates (HETE) to diHETES (5,15-diHETE and 5,11-diHETE). Can also use linoleate (LA, (9Z,12Z)-octadecadienoate, C18:2(n-6)) as substrate and produce hydroxyoctadecadienoates (HODEs) in a regio- and stereospecific manner, being (9R)-HODE ((9R)-hydroxy-(10E,12Z)-octadecadienoate) and (13S)-HODE ((13S)-hydroxy-(9Z,11E)-octadecadienoate) its major products. During neuroinflammation, plays a role in neuronal secretion of specialized preresolving mediators (SPMs) 15R-lipoxin A4 that regulates phagocytic microglia. This chain is Prostaglandin G/H synthase 2 (PTGS2), found in Bos taurus (Bovine).